The primary structure comprises 130 residues: MSEVDKAHLAAINKDVQANDTLFGKIIRKEIPAKIIFEDDEALAFHDVSPQAPIHFLVIPKRRIDMLENAVDSDAALIGKLMVTASKVAKQLGMANGYRVVVNNGKDGAQSVFHLHLHVLGGRQLQWPPG.

The region spanning 22–130 is the HIT domain; it reads LFGKIIRKEI…GGRQLQWPPG (109 aa). The Histidine triad motif motif lies at 114–118; sequence HLHLH.

This chain is Histidine triad nucleotide-binding protein 1 (hint-1), found in Caenorhabditis elegans.